Reading from the N-terminus, the 255-residue chain is uncharacterized protein (255 aa).

Belongs to the methyltransferase superfamily.

This is an uncharacterized protein from Mycolicibacterium paratuberculosis (strain ATCC BAA-968 / K-10) (Mycobacterium paratuberculosis).